Reading from the N-terminus, the 175-residue chain is Large ribosomal subunit protein uL10 (175 aa).

The protein belongs to the universal ribosomal protein uL10 family. Part of the ribosomal stalk of the 50S ribosomal subunit. The N-terminus interacts with L11 and the large rRNA to form the base of the stalk. The C-terminus forms an elongated spine to which L12 dimers bind in a sequential fashion forming a multimeric L10(L12)X complex.

Functionally, forms part of the ribosomal stalk, playing a central role in the interaction of the ribosome with GTP-bound translation factors. In Prochlorococcus marinus subsp. pastoris (strain CCMP1986 / NIES-2087 / MED4), this protein is Large ribosomal subunit protein uL10.